A 470-amino-acid chain; its full sequence is Auxin transporter-like protein 3 (470 aa).

Over 1–57 the chain is Cytoplasmic; that stretch reads MAAEKIETVVAGNYLEMEREEENISGNKKSSTKTKLSNFFWHGGSVYDAWFSCASNQ. The chain crosses the membrane as a helical span at residues 58 to 75; that stretch reads VAQVLLTLPYSFSQLGMM. Topologically, residues 76 to 77 are extracellular; that stretch reads SG. A helical membrane pass occupies residues 78–98; sequence ILFQLFYGLMGSWTAYLISVL. The Cytoplasmic segment spans residues 99–134; the sequence is YVEYRTRKEREKFDFRNHVIQWFEVLDGLLGKHWRN. The chain crosses the membrane as a helical span at residues 135–155; it reads LGLIFNCTFLLFGSVIQLIAC. Over 156 to 170 the chain is Extracellular; it reads ASNIYYINDKLDKRT. A helical transmembrane segment spans residues 171–191; it reads WTYIFGACCATTVFIPSFHNY. A topological domain (cytoplasmic) is located at residue Arg192. The chain crosses the membrane as a helical span at residues 193-213; it reads IWSFLGLAMTTYTSWYLTIAS. Over 214–230 the chain is Extracellular; the sequence is LLHGQAEDVKHSGPTTM. Residues 231–251 traverse the membrane as a helical segment; the sequence is VLYFTGATNILYTFGGHAVTV. The Cytoplasmic segment spans residues 252–264; sequence EIMHAMWKPQKFK. A helical transmembrane segment spans residues 265–285; sequence AIYLLATIYVLTLTLPSASAV. The Extracellular portion of the chain corresponds to 286-312; the sequence is YWAFGDKLLTHSNALSLLPKTGFRDTA. The chain crosses the membrane as a helical span at residues 313-333; it reads VILMLIHQFITFGFASTPLYF. Topologically, residues 334–354 are cytoplasmic; sequence VWEKLIGVHETKSMFKRAMAR. A helical transmembrane segment spans residues 355 to 375; sequence LPVVVPIWFLAIIFPFFGPIN. Residue Ser376 is a topological domain, extracellular. The helical transmembrane segment at 377-397 threads the bilayer; that stretch reads AVGSLLVSFTVYIIPALAHML. The Cytoplasmic portion of the chain corresponds to 398–426; it reads TFAPAPSRENAVERPPRVVGGWMGTYCIN. A helical membrane pass occupies residues 427–447; sequence IFVVVWVFVVGFGFGGWASMV. Topologically, residues 448–470 are extracellular; that stretch reads NFVRQIDTFGLFTKCYQCPPHKP.

Belongs to the amino acid/polyamine transporter 2 family. Amino acid/auxin permease (AAAP) (TC 2.A.18.1) subfamily.

Its subcellular location is the cell membrane. Functionally, carrier protein involved in proton-driven auxin influx. Mediates the formation of auxin gradient from developing leaves (site of auxin biosynthesis) to tips by contributing to the loading of auxin in vascular tissues and facilitating acropetal (base to tip) auxin transport within inner tissues of the root apex, and basipetal (tip to base) auxin transport within outer tissues of the root apex. This chain is Auxin transporter-like protein 3 (LAX3), found in Arabidopsis thaliana (Mouse-ear cress).